A 459-amino-acid polypeptide reads, in one-letter code: Aluminum-activated malate transporter 1 (459 aa).

Over Met-1–Arg-52 the chain is Extracellular. 2 helical membrane-spanning segments follow: residues Val-53–Thr-73 and Pro-74–Met-94. Residues Glu-95 to Arg-108 lie on the Extracellular side of the membrane. Residues Ala-109 to Ala-129 form a helical membrane-spanning segment. The Cytoplasmic segment spans residues Glu-130–Glu-137. The chain crosses the membrane as a helical span at residues Pro-138 to Ile-158. At Pro-159–Glu-160 the chain is on the extracellular side. A helical membrane pass occupies residues Ile-161–Val-181. Over Ser-182 to Thr-199 the chain is Cytoplasmic. Residues Ile-200–Gly-220 traverse the membrane as a helical segment. Topologically, residues Glu-221–Leu-459 are extracellular.

The protein belongs to the aromatic acid exporter (TC 2.A.85) family. Detected in root tips.

Its subcellular location is the cell membrane. With respect to regulation, activated by external aluminum. The enhancement of malate transport is not due to alteration in the selectivity properties but is due to an increased anion permeability. Its function is as follows. Malate transporter critical for aluminum tolerance. Permeable to chloride, nitrate, sulfate and malate. The chain is Aluminum-activated malate transporter 1 (ALMT1) from Triticum aestivum (Wheat).